Reading from the N-terminus, the 587-residue chain is ATP-dependent zinc metalloprotease FtsH 2 (587 aa).

Over 1–12 the chain is Cytoplasmic; the sequence is MSSDRTREVTKR. Residues 13–33 form a helical membrane-spanning segment; sequence ILMVLFGLWLLQFFFLPPLTT. Over 34–102 the chain is Extracellular; that stretch reads RPTELSYSAF…EQRYEVTRTP (69 aa). The chain crosses the membrane as a helical span at residues 103-123; it reads WWVTLLPTVLWLAVMVGLFAW. Residues 124-587 are Cytoplasmic-facing; that stretch reads AQKRQAGAFG…GDDVRRILSA (464 aa). An ATP-binding site is contributed by 192–199; that stretch reads GPPGTGKT. Zn(2+) is bound at residue His-416. Glu-417 is a catalytic residue. Zn(2+) contacts are provided by His-420 and Asp-492.

The protein in the central section; belongs to the AAA ATPase family. This sequence in the C-terminal section; belongs to the peptidase M41 family. As to quaternary structure, homohexamer. It depends on Zn(2+) as a cofactor.

The protein resides in the cell membrane. Acts as a processive, ATP-dependent zinc metallopeptidase for both cytoplasmic and membrane proteins. Plays a role in the quality control of integral membrane proteins. This is ATP-dependent zinc metalloprotease FtsH 2 from Symbiobacterium thermophilum (strain DSM 24528 / JCM 14929 / IAM 14863 / T).